Consider the following 389-residue polypeptide: Cytochrome f (389 aa).

Positions 1-42 (MTTFFISKVNGPVNKSLIWLKIHIYEFFLLKFMLLFPPTVCS) are cleaved as a signal peptide. Residues Tyr-105, Cys-125, Cys-128, and His-129 each coordinate heme. A helical membrane pass occupies residues 355 to 375 (LQALIVFFIFVILTQLFLVLK).

Belongs to the cytochrome f family. The 4 large subunits of the cytochrome b6-f complex are cytochrome b6, subunit IV (17 kDa polypeptide, petD), cytochrome f and the Rieske protein, while the 4 small subunits are PetG, PetL, PetM and PetN. The complex functions as a dimer. The cofactor is heme.

The protein resides in the plastid. It is found in the chloroplast thylakoid membrane. Component of the cytochrome b6-f complex, which mediates electron transfer between photosystem II (PSII) and photosystem I (PSI), cyclic electron flow around PSI, and state transitions. The protein is Cytochrome f of Pleurastrum terricola (Filamentous green alga).